A 69-amino-acid polypeptide reads, in one-letter code: Putative membrane protein insertion efficiency factor (69 aa).

The protein belongs to the UPF0161 family.

The protein localises to the cell membrane. In terms of biological role, could be involved in insertion of integral membrane proteins into the membrane. This is Putative membrane protein insertion efficiency factor from Clostridium botulinum (strain 657 / Type Ba4).